The sequence spans 122 residues: Large ribosomal subunit protein uL14 (122 aa).

It belongs to the universal ribosomal protein uL14 family. As to quaternary structure, part of the 50S ribosomal subunit. Forms a cluster with proteins L3 and L19. In the 70S ribosome, L14 and L19 interact and together make contacts with the 16S rRNA in bridges B5 and B8.

Its function is as follows. Binds to 23S rRNA. Forms part of two intersubunit bridges in the 70S ribosome. The polypeptide is Large ribosomal subunit protein uL14 (Thermodesulfovibrio yellowstonii (strain ATCC 51303 / DSM 11347 / YP87)).